A 136-amino-acid chain; its full sequence is Glutamyl-tRNA(Gln) amidotransferase subunit C, mitochondrial (136 aa).

Residues 1 to 27 constitute a mitochondrion transit peptide; the sequence is MWARAVHLGLRAAARGRRGFTSKADPQ.

This sequence belongs to the GatC family. As to quaternary structure, subunit of the heterotrimeric GatCAB amidotransferase (AdT) complex, composed of A (QRSL1), B (GATB) and C (GATC) subunits.

Its subcellular location is the mitochondrion. It carries out the reaction L-glutamyl-tRNA(Gln) + L-glutamine + ATP + H2O = L-glutaminyl-tRNA(Gln) + L-glutamate + ADP + phosphate + H(+). Its function is as follows. Allows the formation of correctly charged Gln-tRNA(Gln) through the transamidation of misacylated Glu-tRNA(Gln) in the mitochondria. The reaction takes place in the presence of glutamine and ATP through an activated gamma-phospho-Glu-tRNA(Gln). This Bos taurus (Bovine) protein is Glutamyl-tRNA(Gln) amidotransferase subunit C, mitochondrial.